The primary structure comprises 116 residues: Ribosome-binding factor A (116 aa).

It belongs to the RbfA family. In terms of assembly, monomer. Binds 30S ribosomal subunits, but not 50S ribosomal subunits or 70S ribosomes.

Its subcellular location is the cytoplasm. One of several proteins that assist in the late maturation steps of the functional core of the 30S ribosomal subunit. Associates with free 30S ribosomal subunits (but not with 30S subunits that are part of 70S ribosomes or polysomes). Required for efficient processing of 16S rRNA. May interact with the 5'-terminal helix region of 16S rRNA. The protein is Ribosome-binding factor A of Chlorobium phaeobacteroides (strain DSM 266 / SMG 266 / 2430).